A 182-amino-acid polypeptide reads, in one-letter code: uncharacterized protein (182 aa).

It belongs to the mimivirus L6/L7/L57 family.

This is an uncharacterized protein from Acanthamoeba polyphaga mimivirus (APMV).